The sequence spans 235 residues: 1-(5-phosphoribosyl)-5-[(5-phosphoribosylamino)methylideneamino] imidazole-4-carboxamide isomerase (235 aa).

Asp8 serves as the catalytic Proton acceptor. Asp127 acts as the Proton donor in catalysis.

This sequence belongs to the HisA/HisF family.

It localises to the cytoplasm. It catalyses the reaction 1-(5-phospho-beta-D-ribosyl)-5-[(5-phospho-beta-D-ribosylamino)methylideneamino]imidazole-4-carboxamide = 5-[(5-phospho-1-deoxy-D-ribulos-1-ylimino)methylamino]-1-(5-phospho-beta-D-ribosyl)imidazole-4-carboxamide. It participates in amino-acid biosynthesis; L-histidine biosynthesis; L-histidine from 5-phospho-alpha-D-ribose 1-diphosphate: step 4/9. The protein is 1-(5-phosphoribosyl)-5-[(5-phosphoribosylamino)methylideneamino] imidazole-4-carboxamide isomerase of Aliarcobacter butzleri (strain RM4018) (Arcobacter butzleri).